An 801-amino-acid chain; its full sequence is LPS-assembly protein LptD (801 aa).

Residues 1 to 23 (MARLFSLKPLVLALGFCFGTHCA) form the signal peptide.

The protein belongs to the LptD family. In terms of assembly, component of the lipopolysaccharide transport and assembly complex. Interacts with LptE and LptA.

Its subcellular location is the cell outer membrane. Its function is as follows. Together with LptE, is involved in the assembly of lipopolysaccharide (LPS) at the surface of the outer membrane. The protein is LPS-assembly protein LptD of Neisseria gonorrhoeae (strain ATCC 700825 / FA 1090).